The primary structure comprises 76 residues: UPF0154 protein LCA_1273 (76 aa).

A helical membrane pass occupies residues 3–23 (IGIGVLIFVIGALLGAVAGFF). Positions 55 to 76 (PSEKKLNQMMSSMKAQQKRSKK) are disordered.

This sequence belongs to the UPF0154 family.

The protein localises to the cell membrane. The chain is UPF0154 protein LCA_1273 from Latilactobacillus sakei subsp. sakei (strain 23K) (Lactobacillus sakei subsp. sakei).